Consider the following 156-residue polypeptide: Ribosomal RNA large subunit methyltransferase H (156 aa).

S-adenosyl-L-methionine contacts are provided by residues Leu-73, Gly-104, and Leu-123–Leu-128.

Belongs to the RNA methyltransferase RlmH family. Homodimer.

The protein resides in the cytoplasm. It catalyses the reaction pseudouridine(1915) in 23S rRNA + S-adenosyl-L-methionine = N(3)-methylpseudouridine(1915) in 23S rRNA + S-adenosyl-L-homocysteine + H(+). Functionally, specifically methylates the pseudouridine at position 1915 (m3Psi1915) in 23S rRNA. In Psychromonas ingrahamii (strain DSM 17664 / CCUG 51855 / 37), this protein is Ribosomal RNA large subunit methyltransferase H.